The chain runs to 298 residues: Acetylglutamate kinase (298 aa).

Substrate-binding positions include Gly-69–Gly-70, Arg-91, and Asn-191.

This sequence belongs to the acetylglutamate kinase family. ArgB subfamily.

The protein resides in the cytoplasm. It carries out the reaction N-acetyl-L-glutamate + ATP = N-acetyl-L-glutamyl 5-phosphate + ADP. It functions in the pathway amino-acid biosynthesis; L-arginine biosynthesis; N(2)-acetyl-L-ornithine from L-glutamate: step 2/4. Catalyzes the ATP-dependent phosphorylation of N-acetyl-L-glutamate. This is Acetylglutamate kinase from Neisseria gonorrhoeae (strain ATCC 700825 / FA 1090).